Consider the following 314-residue polypeptide: 4-hydroxy-3-methylbut-2-enyl diphosphate reductase (314 aa).

[4Fe-4S] cluster is bound at residue Cys12. (2E)-4-hydroxy-3-methylbut-2-enyl diphosphate is bound by residues His41 and His74. 2 residues coordinate dimethylallyl diphosphate: His41 and His74. Isopentenyl diphosphate is bound by residues His41 and His74. Cys96 contributes to the [4Fe-4S] cluster binding site. His124 is a binding site for (2E)-4-hydroxy-3-methylbut-2-enyl diphosphate. His124 serves as a coordination point for dimethylallyl diphosphate. His124 lines the isopentenyl diphosphate pocket. Glu126 (proton donor) is an active-site residue. Thr167 provides a ligand contact to (2E)-4-hydroxy-3-methylbut-2-enyl diphosphate. Position 197 (Cys197) interacts with [4Fe-4S] cluster. (2E)-4-hydroxy-3-methylbut-2-enyl diphosphate-binding residues include Ser225, Ser226, Asn227, and Ser269. Positions 225, 226, 227, and 269 each coordinate dimethylallyl diphosphate. Residues Ser225, Ser226, Asn227, and Ser269 each coordinate isopentenyl diphosphate.

This sequence belongs to the IspH family. [4Fe-4S] cluster serves as cofactor.

It carries out the reaction isopentenyl diphosphate + 2 oxidized [2Fe-2S]-[ferredoxin] + H2O = (2E)-4-hydroxy-3-methylbut-2-enyl diphosphate + 2 reduced [2Fe-2S]-[ferredoxin] + 2 H(+). It catalyses the reaction dimethylallyl diphosphate + 2 oxidized [2Fe-2S]-[ferredoxin] + H2O = (2E)-4-hydroxy-3-methylbut-2-enyl diphosphate + 2 reduced [2Fe-2S]-[ferredoxin] + 2 H(+). It participates in isoprenoid biosynthesis; dimethylallyl diphosphate biosynthesis; dimethylallyl diphosphate from (2E)-4-hydroxy-3-methylbutenyl diphosphate: step 1/1. The protein operates within isoprenoid biosynthesis; isopentenyl diphosphate biosynthesis via DXP pathway; isopentenyl diphosphate from 1-deoxy-D-xylulose 5-phosphate: step 6/6. Functionally, catalyzes the conversion of 1-hydroxy-2-methyl-2-(E)-butenyl 4-diphosphate (HMBPP) into a mixture of isopentenyl diphosphate (IPP) and dimethylallyl diphosphate (DMAPP). Acts in the terminal step of the DOXP/MEP pathway for isoprenoid precursor biosynthesis. This is 4-hydroxy-3-methylbut-2-enyl diphosphate reductase from Mannheimia succiniciproducens (strain KCTC 0769BP / MBEL55E).